The chain runs to 311 residues: Aspartate carbamoyltransferase catalytic subunit (311 aa).

Positions 58 and 59 each coordinate carbamoyl phosphate. Residue lysine 86 participates in L-aspartate binding. Residues arginine 108, histidine 136, and glutamine 139 each coordinate carbamoyl phosphate. 2 residues coordinate L-aspartate: arginine 169 and arginine 223. Glycine 264 and proline 265 together coordinate carbamoyl phosphate.

The protein belongs to the aspartate/ornithine carbamoyltransferase superfamily. ATCase family. Heterododecamer (2C3:3R2) of six catalytic PyrB chains organized as two trimers (C3), and six regulatory PyrI chains organized as three dimers (R2).

The catalysed reaction is carbamoyl phosphate + L-aspartate = N-carbamoyl-L-aspartate + phosphate + H(+). It functions in the pathway pyrimidine metabolism; UMP biosynthesis via de novo pathway; (S)-dihydroorotate from bicarbonate: step 2/3. Its function is as follows. Catalyzes the condensation of carbamoyl phosphate and aspartate to form carbamoyl aspartate and inorganic phosphate, the committed step in the de novo pyrimidine nucleotide biosynthesis pathway. The sequence is that of Aspartate carbamoyltransferase catalytic subunit from Acidiphilium cryptum (strain JF-5).